Here is a 241-residue protein sequence, read N- to C-terminus: Sugar fermentation stimulation protein homolog (241 aa).

It belongs to the SfsA family.

The sequence is that of Sugar fermentation stimulation protein homolog from Jannaschia sp. (strain CCS1).